A 226-amino-acid chain; its full sequence is Cysteine and histidine-rich domain-containing protein RAR1 (226 aa).

Zn(2+) is bound by residues C12, C17, C31, H34, C49, C50, C66, and H71. The region spanning 12–71 is the CHORD 1 domain; the sequence is CQRIGCNAMFTDDDNPQGSCQFHASGPFFHDGMKEWSCCKQRSHDFSLFLEIPGCKTGKH. The CCCH signature appears at 104–124; it reads CSRCRQGFFCSDHGSQPKEQI. Zn(2+) is bound by residues C159, C164, C178, H181, C196, C197, C213, and H218. The 60-residue stretch at 159 to 218 folds into the CHORD 2 domain; that stretch reads CKNKGCGQTFKERDNHETACSHHPGPAVFHDRLRGWKCCDVHVKEFDEFMEIPPCTKGWH.

In terms of assembly, interacts with HSP90-1, HSP90-2, SGT1A and SGT1B. Forms a ternary complex with SGT1A and barley HSP90.

In terms of biological role, required specifically for plant innate immunity. Is essential for resistance conferred by multiple R genes recognizing different bacterial and oomycete pathogen isolates like avirulent P.syringae or H.parasitica (downy mildew). Contributes additively with SGT1B to RPP5-dependent resistance. Functions as a positive regulator of RPS5 accumulation by assisting its stabilization. May function as co-chaperone of HSP90-2 to positively regulate the steady-state accumulation of RPM1 and protect it from SGT1-mediated degradation. Acts as a negative regulator of pathogen-associated molecular pattern (PAMP)-triggered immunity. The protein is Cysteine and histidine-rich domain-containing protein RAR1 (RAR1) of Arabidopsis thaliana (Mouse-ear cress).